We begin with the raw amino-acid sequence, 361 residues long: Probable mannose-1-phosphate guanylyltransferase 2 (361 aa).

Residues Leu-6 and Val-7 each contribute to the GDP-alpha-D-mannose site. Gly-9, Gly-11, Thr-12, Arg-13, and Lys-23 together coordinate diphosphate. GDP-alpha-D-mannose is bound by residues Gly-85, Asn-109, Asp-111, Gly-146, and Asn-173.

Belongs to the transferase hexapeptide repeat family.

The catalysed reaction is alpha-D-mannose 1-phosphate + GTP + H(+) = GDP-alpha-D-mannose + diphosphate. It functions in the pathway nucleotide-sugar biosynthesis; GDP-alpha-D-mannose biosynthesis; GDP-alpha-D-mannose from alpha-D-mannose 1-phosphate (GTP route): step 1/1. Catalyzes a reaction of the Smirnoff-Wheeler pathway, the major route to ascorbate biosynthesis in plants. This chain is Probable mannose-1-phosphate guanylyltransferase 2, found in Oryza sativa subsp. japonica (Rice).